Consider the following 453-residue polypeptide: Keratin, type I cytoskeletal 15 (453 aa).

Residues 1 to 102 form a head region; sequence MATTLLQTSS…GGDGGLLSGN (102 aa). 5 positions are modified to phosphoserine: Ser16, Ser17, Ser34, Ser48, and Ser56. The segment at 103–138 is coil 1A; sequence EKITMQNLNDRLASYLEKVRALEEANADLEVKIRDW. An IF rod domain is found at 103 to 415; sequence EKITMQNLND…SLLEGQDARM (313 aa). Positions 139–157 are linker 1; the sequence is YQRQSPTSPERDYSPYFKT. Residues 158-249 form a coil 1B region; sequence TDELRDKILA…KNHEEEMKEF (92 aa). A linker 12 region spans residues 250 to 269; that stretch reads SNQLAGQVNVEMDAAPGVDL. Residues 270 to 411 are coil 2; sequence TRVLSEMREQ…ATYHSLLEGQ (142 aa). Residue Lys298 forms a Glycyl lysine isopeptide (Lys-Gly) (interchain with G-Cter in SUMO2) linkage. Phosphothreonine is present on residues Thr299 and Thr321. The tract at residues 412-453 is tail; sequence DARMAGIGTGEASLGGGGGGKVRINVEESVDGKVVSSRKREI. Lys444 is covalently cross-linked (Glycyl lysine isopeptide (Lys-Gly) (interchain with G-Cter in SUMO1); alternate). A Glycyl lysine isopeptide (Lys-Gly) (interchain with G-Cter in SUMO2); alternate cross-link involves residue Lys444.

The protein belongs to the intermediate filament family. Heterotetramer of two type I and two type II keratins. Interacts with NOD2. As to expression, expressed in the basal cell layers of several stratified epithelia including esophagus, tongue, stomach, epidermis and hair follicle. In the hair follicle, expression is detected mainly in the basal layer of the outer root sheath (ORS), except just above the follicle bulb where it occurs throughout its thickness. Low expression levels are seen in the single layer of ORS cells around the base of the follicle which increases in the palisade-like cells of the bulb. Also expressed in the basal cells of the sebaceous glands, and expression in the epidermis occurs in a punctate pattern.

The polypeptide is Keratin, type I cytoskeletal 15 (Ovis aries (Sheep)).